The sequence spans 162 residues: MLNQLENLTERVGGSNKLVDRWLDVRKHLLVAYYNLVGIKPGKESYMRLNEKALDDFCQSLVDYLSAGHFSIYERILHKLEGNGQLLHAAKIWPLLEDNTQRIMDYYDTSLETAIDHDNCLEFQQALSDIGEALEARFVLEDKLIMLVFDAMHDGARVKRPA.

This sequence belongs to the Rsd/AlgQ family. Interacts with RpoD.

The protein resides in the cytoplasm. Binds RpoD and negatively regulates RpoD-mediated transcription activation by preventing the interaction between the primary sigma factor RpoD with the catalytic core of the RNA polymerase and with promoter DNA. May be involved in replacement of the RNA polymerase sigma subunit from RpoD to RpoS during the transition from exponential growth to the stationary phase. In Salmonella agona (strain SL483), this protein is Regulator of sigma D.